A 287-amino-acid chain; its full sequence is Undecaprenyl-diphosphatase (287 aa).

6 helical membrane passes run 50 to 70, 99 to 119, 128 to 148, 206 to 226, 231 to 251, and 263 to 283; these read PGVS…IAYF, IAMA…KLFW, LRSV…LAVA, FLLG…DALA, AGPL…WLAI, and TWLF…WWSI.

Belongs to the UppP family.

The protein localises to the cell inner membrane. The catalysed reaction is di-trans,octa-cis-undecaprenyl diphosphate + H2O = di-trans,octa-cis-undecaprenyl phosphate + phosphate + H(+). Catalyzes the dephosphorylation of undecaprenyl diphosphate (UPP). Confers resistance to bacitracin. This Parasynechococcus marenigrum (strain WH8102) protein is Undecaprenyl-diphosphatase.